Reading from the N-terminus, the 155-residue chain is Ribonuclease H (155 aa).

The RNase H type-1 domain occupies 1-142 (MLKQVEIFTD…CDELARAAAM (142 aa)). Residues D10, E48, D70, and D134 each coordinate Mg(2+).

This sequence belongs to the RNase H family. As to quaternary structure, monomer. Requires Mg(2+) as cofactor.

The protein resides in the cytoplasm. The enzyme catalyses Endonucleolytic cleavage to 5'-phosphomonoester.. Functionally, endonuclease that specifically degrades the RNA of RNA-DNA hybrids. The polypeptide is Ribonuclease H (Salmonella paratyphi A (strain AKU_12601)).